The primary structure comprises 1068 residues: Cytospin-B (1068 aa).

Residues Met1 to Asp221 are disordered. Residue Arg2 is the site of N-myristoyl glycine attachment. The segment covering Ser29 to Ser40 has biased composition (low complexity). Residues Ser38 and Ser55 each carry the phosphoserine modification. Thr78 is modified (phosphothreonine). Phosphoserine is present on residues Ser112, Ser131, Ser134, Ser137, and Ser138. The span at Ser126–Thr144 shows a compositional bias: low complexity. Thr142 is subject to Phosphothreonine. Basic and acidic residues predominate over residues Pro154 to Leu200. Phosphoserine occurs at positions 218 and 241. 3 stretches are compositionally biased toward polar residues: residues Pro261 to Ser295, Leu309 to Ser323, and Glu337 to Glu367. The disordered stretch occupies residues Pro261–Glu367. Phosphoserine is present on residues Ser361, Ser366, Ser369, and Ser425. The stretch at Glu579–His773 forms a coiled coil. Positions Val777–Asp796 are disordered. A phosphoserine mark is found at Ser847 and Ser863. 2 disordered regions span residues Ala859–Leu885 and Gly898–Pro922. Positions Gln866–Arg875 are enriched in polar residues. The segment covering Gly898–Leu909 has biased composition (basic and acidic residues). 2 positions are modified to phosphoserine: Ser912 and Ser914. Positions Ser912–Pro922 are enriched in low complexity. One can recognise a Calponin-homology (CH) domain in the interval Gly962–Glu1067.

This sequence belongs to the cytospin-A family. As to expression, highly expressed in testis. Barely detectable in other tissues. Also highly expressed in some cancer cell lines.

It localises to the nucleus. It is found in the membrane. In Homo sapiens (Human), this protein is Cytospin-B (SPECC1).